Here is a 365-residue protein sequence, read N- to C-terminus: Chorismate synthase (365 aa).

Residue R46 participates in NADP(+) binding. Residues 123–125 (RSS), 241–242 (NG), G281, 296–300 (KPTPS), and R322 each bind FMN.

It belongs to the chorismate synthase family. As to quaternary structure, homotetramer. Requires FMNH2 as cofactor.

The enzyme catalyses 5-O-(1-carboxyvinyl)-3-phosphoshikimate = chorismate + phosphate. Its pathway is metabolic intermediate biosynthesis; chorismate biosynthesis; chorismate from D-erythrose 4-phosphate and phosphoenolpyruvate: step 7/7. Catalyzes the anti-1,4-elimination of the C-3 phosphate and the C-6 proR hydrogen from 5-enolpyruvylshikimate-3-phosphate (EPSP) to yield chorismate, which is the branch point compound that serves as the starting substrate for the three terminal pathways of aromatic amino acid biosynthesis. This reaction introduces a second double bond into the aromatic ring system. The protein is Chorismate synthase of Helicobacter pylori (strain G27).